We begin with the raw amino-acid sequence, 217 residues long: Histone H1-gamma, late (217 aa).

Disordered regions lie at residues Met1–Ser21 and Gly80–Lys217. The region spanning Ala17–Lys91 is the H15 domain. The span at Ile104–Ala113 shows a compositional bias: basic residues. Residues Lys114–Ala123 show a composition bias toward basic and acidic residues. Residues Leu124–Lys217 show a composition bias toward basic residues.

Belongs to the histone H1/H5 family.

Its subcellular location is the nucleus. It localises to the chromosome. Its function is as follows. Histones H1 are necessary for the condensation of nucleosome chains into higher-order structures. This chain is Histone H1-gamma, late, found in Strongylocentrotus purpuratus (Purple sea urchin).